The primary structure comprises 206 residues: Ion-translocating oxidoreductase complex subunit G (206 aa).

The helical transmembrane segment at 9 to 29 threads the bilayer; it reads GITLALFAAGSTGLTAAINQM. T174 carries the FMN phosphoryl threonine modification.

It belongs to the RnfG family. The complex is composed of six subunits: RsxA, RsxB, RsxC, RsxD, RsxE and RsxG. FMN serves as cofactor.

The protein resides in the cell inner membrane. Functionally, part of a membrane-bound complex that couples electron transfer with translocation of ions across the membrane. Required to maintain the reduced state of SoxR. The sequence is that of Ion-translocating oxidoreductase complex subunit G from Escherichia coli O157:H7.